Reading from the N-terminus, the 115-residue chain is Large ribosomal subunit protein bL20 (115 aa).

The protein belongs to the bacterial ribosomal protein bL20 family.

Binds directly to 23S ribosomal RNA and is necessary for the in vitro assembly process of the 50S ribosomal subunit. It is not involved in the protein synthesizing functions of that subunit. In Parasynechococcus marenigrum (strain WH8102), this protein is Large ribosomal subunit protein bL20.